We begin with the raw amino-acid sequence, 498 residues long: Myotilin (498 aa).

Disordered stretches follow at residues 1–46 (MFNY…QPRQ), 64–151 (MSSS…HEIQ), and 202–241 (QDDSGAQDSQQHNSEHARLQVPTSQVRSRSTSRGDVNDQD). Position 20 is an omega-N-methylarginine (R20). Over residues 29-43 (SSFSSQTKQSSIIIQ) the composition is skewed to low complexity. Residues 77–138 (AGSNPGQRVT…INAKPSQTAN (62 aa)) are compositionally biased toward polar residues. The segment at 79–150 (SNPGQRVTTT…PIPRTPDHEI (72 aa)) is necessary for interaction with ACTN1. Residues 202 to 212 (QDDSGAQDSQQ) show a composition bias toward low complexity. The interval 215–493 (SEHARLQVPT…QRLAAQSGLY (279 aa)) is necessary for interaction with FLNC. The tract at residues 215-498 (SEHARLQVPT…QSGLYESEEL (284 aa)) is necessary for interaction with ACTA1. The span at 222-235 (VPTSQVRSRSTSRG) shows a compositional bias: polar residues. Ig-like C2-type domains follow at residues 250 to 335 (PRFI…ATFT) and 349 to 441 (PMFI…LDVT).

The protein belongs to the myotilin/palladin family. In terms of assembly, homodimer. Interacts with ACTA1, ACTN1, FLNA, FLNB, FLNC and MYOZ2. Interacts with the C-terminal region of MYOZ1. Expressed in skeletal muscle (at protein level). Expressed in skeletal muscle, heart, bone marrow and thyroid gland.

The protein localises to the cell membrane. Its subcellular location is the sarcolemma. It is found in the cytoplasm. It localises to the cytoskeleton. The protein resides in the myofibril. The protein localises to the sarcomere. Its subcellular location is the z line. In terms of biological role, component of a complex of multiple actin cross-linking proteins. Involved in the control of myofibril assembly and stability at the Z lines in muscle cells. This Homo sapiens (Human) protein is Myotilin (MYOT).